Here is a 216-residue protein sequence, read N- to C-terminus: Large ribosomal subunit protein uL3 (216 aa).

Residues 119–143 (GYQGNIHKDGQSRGPMAHGSRYHRR) form a disordered region.

Belongs to the universal ribosomal protein uL3 family. In terms of assembly, part of the 50S ribosomal subunit. Forms a cluster with proteins L14 and L19.

In terms of biological role, one of the primary rRNA binding proteins, it binds directly near the 3'-end of the 23S rRNA, where it nucleates assembly of the 50S subunit. This chain is Large ribosomal subunit protein uL3, found in Levilactobacillus brevis (strain ATCC 367 / BCRC 12310 / CIP 105137 / JCM 1170 / LMG 11437 / NCIMB 947 / NCTC 947) (Lactobacillus brevis).